The chain runs to 828 residues: Fibroblast growth factor receptor 4 (828 aa).

An N-terminal signal peptide occupies residues 1–31 (MSGSIRRSYTAMQNFPRFLLGVLFVATLSSC). The Extracellular portion of the chain corresponds to 32–392 (RPRLSEDEAN…AEPAESRYMD (361 aa)). One can recognise an Ig-like C2-type 1 domain in the interval 33-127 (PRLSEDEANW…GKILRRFSIS (95 aa)). Residues C67 and C112 are joined by a disulfide bond. N70 is a glycosylation site (N-linked (GlcNAc...) asparagine). Residues 132 to 156 (LASGDEEEEEEDDDDEDGRREDTTA) form a disordered region. A compositionally biased stretch (acidic residues) spans 135 to 147 (GDEEEEEEDDDDE). Ig-like C2-type domains are found at residues 169-259 (PYWT…LTYT) and 272-372 (PILQ…AWLT). A disulfide bond links C194 and C247. Residues N244, N281, N313, and N345 are each glycosylated (N-linked (GlcNAc...) asparagine). A disulfide bridge connects residues C294 and C356. The chain crosses the membrane as a helical span at residues 393–413 (IIIYTSGFLAVAMAIMIVILC). At 414 to 828 (RMQTPHSKQT…YHNIHSQLGT (415 aa)) the chain is on the cytoplasmic side. One can recognise a Protein kinase domain in the interval 490–777 (LVLGKPLGEG…ILTAVSEEYL (288 aa)). ATP contacts are provided by residues 496 to 504 (LGEGCFGQV) and K526. D635 functions as the Proton acceptor in the catalytic mechanism. Residues Y665, Y666, and Y776 each carry the phosphotyrosine; by autocatalysis modification.

This sequence belongs to the protein kinase superfamily. Tyr protein kinase family. Fibroblast growth factor receptor subfamily. Post-translationally, ubiquitinated. Subject to proteasomal degradation when not fully glycosylated. Autophosphorylated. Binding of FGF family members together with heparan sulfate proteoglycan or heparin promotes receptor dimerization and autophosphorylation on tyrosine residues. Autophosphorylation occurs in trans between the two FGFR molecules present in the dimer.

The protein localises to the cell membrane. Its subcellular location is the endosome. It is found in the endoplasmic reticulum. The catalysed reaction is L-tyrosyl-[protein] + ATP = O-phospho-L-tyrosyl-[protein] + ADP + H(+). Its activity is regulated as follows. Present in an inactive conformation in the absence of bound ligand. Ligand binding leads to dimerization and activation by autophosphorylation on tyrosine residues. Functionally, tyrosine-protein kinase that acts as a cell-surface receptor for fibroblast growth factors and plays a role in the regulation of cell proliferation, differentiation and migration, and in regulation of lipid metabolism, bile acid biosynthesis, glucose uptake, vitamin D metabolism and phosphate homeostasis. Required for normal down-regulation of the expression of CYP7A1, the rate-limiting enzyme in bile acid synthesis, in response to FGF19. Phosphorylates PLCG1 and FRS2. Ligand binding leads to the activation of several signaling cascades. Activation of PLCG1 leads to the production of the cellular signaling molecules diacylglycerol and inositol 1,4,5-trisphosphate. Phosphorylation of FRS2 triggers recruitment of GRB2, GAB1, PIK3R1 and SOS1, and mediates activation of RAS, MAPK1/ERK2, MAPK3/ERK1 and the MAP kinase signaling pathway, as well as of the AKT1 signaling pathway. This Xenopus laevis (African clawed frog) protein is Fibroblast growth factor receptor 4 (fgfr4).